We begin with the raw amino-acid sequence, 570 residues long: Low-affinity glucose transporter HXT1 (570 aa).

The span at 1–20 shows a compositional bias: polar residues; it reads MNSTPDLISPQKSNSSNSYE. The disordered stretch occupies residues 1–51; that stretch reads MNSTPDLISPQKSNSSNSYELESGRSKAMNTPEGKNESFHDNLSESQVQPA. Over 1–60 the chain is Cytoplasmic; that stretch reads MNSTPDLISPQKSNSSNSYELESGRSKAMNTPEGKNESFHDNLSESQVQPAVAPPNTGKG. Phosphoserine is present on residues serine 23, serine 38, and serine 44. The segment covering 34 to 43 has biased composition (basic and acidic residues); that stretch reads GKNESFHDNL. A helical transmembrane segment spans residues 61–81; that stretch reads VYVTVSICCVMVAFGGFIFGW. The Extracellular portion of the chain corresponds to 82–116; the sequence is DTGTISGFVAQTDFLRRFGMKHHDGSHYLSKVRTG. A helical transmembrane segment spans residues 117–137; it reads LIVSIFNIGCAIGGIVLAKLG. Over 138-143 the chain is Cytoplasmic; that stretch reads DMYGRR. A helical transmembrane segment spans residues 144–164; it reads IGLIVVVVIYTIGIIIQIASI. Topologically, residues 165-174 are extracellular; that stretch reads NKWYQYFIGR. The helical transmembrane segment at 175–195 threads the bilayer; sequence IISGLGVGGITVLSPMLISEV. Residues 196–201 lie on the Cytoplasmic side of the membrane; that stretch reads APSEMR. Residues 202-222 traverse the membrane as a helical segment; it reads GTLVSCYQVMITLGIFLGYCT. At 223–236 the chain is on the extracellular side; the sequence is NFGTKNYSNSVQWR. N-linked (GlcNAc...) asparagine glycosylation occurs at asparagine 228. The helical transmembrane segment at 237-257 threads the bilayer; it reads VPLGLCFAWALFMIGGMMFVP. The Cytoplasmic segment spans residues 258–340; it reads ESPRYLVEAG…IQSLQQLTGD (83 aa). A helical membrane pass occupies residues 341 to 357; the sequence is NYFFYYGTIVFQAVGLS. At 358-363 the chain is on the extracellular side; the sequence is DSFETS. The helical transmembrane segment at 364–381 threads the bilayer; it reads IVFGVVNFFSTCCSLYTV. At 382-388 the chain is on the cytoplasmic side; the sequence is DRFGRRN. A helical transmembrane segment spans residues 389-409; sequence CLMWGAVGMVCCYVVYASVGV. Residues 410-431 are Extracellular-facing; that stretch reads TRLWPNGQDQPSSKGAGNCMIV. The helical transmembrane segment at 432 to 452 threads the bilayer; it reads FACFYIFCFATTWAPIAYVVI. Topologically, residues 453–469 are cytoplasmic; the sequence is SECFPLRVKSKCMSIAS. Residues 470–490 form a helical membrane-spanning segment; sequence AANWIWGFLISFFTPFITGAI. Asparagine 491 is a topological domain (extracellular). Residues 492–512 traverse the membrane as a helical segment; sequence FYYGYVFMGCMVFAYFYVFFF. At 513–570 the chain is on the cytoplasmic side; that stretch reads VPETKGLSLEEVNDMYAEGVLPWKSASWVPVSKRGADYNADDLMHDDQPFYKSLFSRK.

Belongs to the major facilitator superfamily. Sugar transporter (TC 2.A.1.1) family.

The protein localises to the membrane. Low-affinity glucose transporter. HXT1 is as well involved in the transport of mannose. The protein is Low-affinity glucose transporter HXT1 (HXT1) of Saccharomyces cerevisiae (strain ATCC 204508 / S288c) (Baker's yeast).